Here is a 558-residue protein sequence, read N- to C-terminus: Glucose-6-phosphate isomerase (558 aa).

Glu363 serves as the catalytic Proton donor. Active-site residues include His394 and Lys522.

It belongs to the GPI family.

The protein localises to the cytoplasm. It catalyses the reaction alpha-D-glucose 6-phosphate = beta-D-fructose 6-phosphate. Its pathway is carbohydrate biosynthesis; gluconeogenesis. The protein operates within carbohydrate degradation; glycolysis; D-glyceraldehyde 3-phosphate and glycerone phosphate from D-glucose: step 2/4. Catalyzes the reversible isomerization of glucose-6-phosphate to fructose-6-phosphate. This Blochmanniella floridana protein is Glucose-6-phosphate isomerase.